Here is a 152-residue protein sequence, read N- to C-terminus: Cell division protein SepF (152 aa).

It belongs to the SepF family. As to quaternary structure, homodimer. Interacts with FtsZ.

The protein resides in the cytoplasm. In terms of biological role, cell division protein that is part of the divisome complex and is recruited early to the Z-ring. Probably stimulates Z-ring formation, perhaps through the cross-linking of FtsZ protofilaments. Its function overlaps with FtsA. The sequence is that of Cell division protein SepF from Clostridioides difficile (strain 630) (Peptoclostridium difficile).